Reading from the N-terminus, the 1302-residue chain is Neuroglian (1302 aa).

The first 23 residues, 1–23 (MWRQSTILAALLVALLCAGSAES), serve as a signal peptide directing secretion. Over 24 to 1138 (KGNRPPRITK…ANAGWFIGMM (1115 aa)) the chain is Extracellular. Ig-like C2-type domains follow at residues 29–133 (PRIT…AELN), 134–225 (AFKD…YKIG), 245–330 (PPVR…QSFS), 339–426 (PYFT…VYLN), 432–524 (PTIS…TRIT), and 521–610 (TRIT…ANLI). 4 disulfide bridges follow: cysteine 59-cysteine 111, cysteine 155-cysteine 212, cysteine 268-cysteine 317, and cysteine 360-cysteine 410. Asparagine 182 and asparagine 198 each carry an N-linked (GlcNAc...) asparagine glycan. N-linked (GlcNAc...) asparagine glycans are attached at residues asparagine 411 and asparagine 448. Fibronectin type-III domains are found at residues 614–711 (VPNA…TQPD), 716–813 (NPDN…SGED), 818–915 (APTN…TPEG), 916–1017 (VPSP…LKDA), and 1021–1119 (APAT…TVEG). Cysteine 625 and cysteine 706 are joined by a disulfide. N-linked (GlcNAc...) asparagine glycosylation is found at asparagine 652 and asparagine 683. Asparagine 821 is a glycosylation site (N-linked (GlcNAc...) asparagine). Asparagine 1125 is a glycosylation site (N-linked (GlcNAc...) asparagine). The helical transmembrane segment at 1139–1154 (LALAFIIILFIIICII) threads the bilayer. The Cytoplasmic segment spans residues 1155–1302 (RRNRGGKYDV…AAAGAVATYV (148 aa)). Residues 1172–1182 (GRRDYPEEGGF) show a composition bias toward basic and acidic residues. 2 disordered regions span residues 1172-1223 (GRRD…GDTG) and 1236-1291 (VPGK…ASNG). Residues 1188-1203 (PLDNKSAGRQSVSSAN) show a composition bias toward polar residues. Residues 1253-1275 (AAAHQAAPTAGGSGAAGSAAAAG) show a composition bias toward low complexity.

As to quaternary structure, forms a complex with Nrx-IV/Nrx and Cont. Forms a complex composed of septate junction proteins Nrx-IV/Nrx, Tsf2/MTf, Cont and Nrg during late embryogenesis. In terms of tissue distribution, restricted to the surface of neurons and glia in the developing nervous system. As to expression, restricted to non-neuronal tissues.

Its subcellular location is the cell membrane. The protein resides in the cell junction. It is found in the septate junction. Functionally, essential for septate junctions. Septate junctions, which are the equivalent of vertebrate tight junctions, are characterized by regular arrays of transverse structures that span the intermembrane space and form a physical barrier to diffusion. Required for formation of the hemolymph-brain barrier (the insect blood-brain barrier). Vital for embryonic development. Involved in the targeting for degradation or recycling of certain septate junction components, including kune and bou/boudin, by regulating their endocytosis. Its function is as follows. May play a role in neural and glial cell adhesion in the developing embryo. May be a more general cell adhesion molecule involved in non-neuronal tissues and imaginal disk morphogenesis. This Drosophila melanogaster (Fruit fly) protein is Neuroglian (Nrg).